The following is a 237-amino-acid chain: MGRAHEVRAASMAKTAAKKSAANGRASKEIYMAAKAGGSDPSSNLALRALIDKAKSNQIPKEVIDRAIKRATGGDAENYVSNRYEGMGPGNTAIIVDALTSNVNRAAANIREVFNKNHGNPEGKVAFMFEEVSMFAFKGKTEEEVLEQLMMSEVDVNDVEVEEDMIIVTAPYKSFNAVKHSLDELGIEEYLMSEIKLIPIDDYIEVSDAELKQQLQTLLDKLDELEDVQNVYHNATI.

The tract at residues 1 to 20 (MGRAHEVRAASMAKTAAKKS) is disordered. Over residues 9-20 (AASMAKTAAKKS) the composition is skewed to low complexity.

This sequence belongs to the TACO1 family.

The protein resides in the cytoplasm. The polypeptide is Probable transcriptional regulatory protein Mfl546 (Mesoplasma florum (strain ATCC 33453 / NBRC 100688 / NCTC 11704 / L1) (Acholeplasma florum)).